The following is a 108-amino-acid chain: Protein YcgL (108 aa).

In terms of domain architecture, YcgL spans 12–96; that stretch reads MFCVIYRSSK…SPEDLLKQHL (85 aa).

In Shigella dysenteriae serotype 1 (strain Sd197), this protein is Protein YcgL.